Reading from the N-terminus, the 206-residue chain is Transmembrane emp24 domain-containing protein bai (206 aa).

Residues 1-20 (MMKAILATLAIFGCIWPGQS) form the signal peptide. Topologically, residues 21-172 (VMFHLTPNTQ…RDTNEKTNSR (152 aa)) are lumenal. In terms of domain architecture, GOLD spans 30-140 (QKCLKEDIQA…LKPLEVDLKR (111 aa)). Residues 173–193 (VLFFSIFSMCCLLGLATWQVL) traverse the membrane as a helical segment. At 194-206 (YLRRYFKAKKLIE) the chain is on the cytoplasmic side.

The protein belongs to the EMP24/GP25L family.

It localises to the membrane. Eca and bai are essential, though not redundant, for dorsoventral patterning of the embryo. Specifically required during early embryogenesis for the activity of maternal tkv, while the zygotic tkv is not affected. This Drosophila willistoni (Fruit fly) protein is Transmembrane emp24 domain-containing protein bai.